The following is a 295-amino-acid chain: Small ribosomal subunit protein uS2 (295 aa).

Residues 247–295 (TDKGLTSKNVSKLKQTKKFSKTKNIDEETNTEFEQALNDADENKNSDNA) are disordered.

This sequence belongs to the universal ribosomal protein uS2 family.

This is Small ribosomal subunit protein uS2 from Rickettsia conorii (strain ATCC VR-613 / Malish 7).